Here is a 271-residue protein sequence, read N- to C-terminus: Formamidopyrimidine-DNA glycosylase (271 aa).

P2 (schiff-base intermediate with DNA) is an active-site residue. E3 functions as the Proton donor in the catalytic mechanism. K58 functions as the Proton donor; for beta-elimination activity in the catalytic mechanism. Residues H92, R111, and R152 each contribute to the DNA site. The FPG-type zinc finger occupies S237–R271. The active-site Proton donor; for delta-elimination activity is the R261.

This sequence belongs to the FPG family. As to quaternary structure, monomer. Requires Zn(2+) as cofactor.

The enzyme catalyses Hydrolysis of DNA containing ring-opened 7-methylguanine residues, releasing 2,6-diamino-4-hydroxy-5-(N-methyl)formamidopyrimidine.. It catalyses the reaction 2'-deoxyribonucleotide-(2'-deoxyribose 5'-phosphate)-2'-deoxyribonucleotide-DNA = a 3'-end 2'-deoxyribonucleotide-(2,3-dehydro-2,3-deoxyribose 5'-phosphate)-DNA + a 5'-end 5'-phospho-2'-deoxyribonucleoside-DNA + H(+). Functionally, involved in base excision repair of DNA damaged by oxidation or by mutagenic agents. Acts as a DNA glycosylase that recognizes and removes damaged bases. Has a preference for oxidized purines, such as 7,8-dihydro-8-oxoguanine (8-oxoG). Has AP (apurinic/apyrimidinic) lyase activity and introduces nicks in the DNA strand. Cleaves the DNA backbone by beta-delta elimination to generate a single-strand break at the site of the removed base with both 3'- and 5'-phosphates. The polypeptide is Formamidopyrimidine-DNA glycosylase (Xanthomonas euvesicatoria pv. vesicatoria (strain 85-10) (Xanthomonas campestris pv. vesicatoria)).